The sequence spans 102 residues: Putative pterin-4-alpha-carbinolamine dehydratase (102 aa).

The protein belongs to the pterin-4-alpha-carbinolamine dehydratase family.

The catalysed reaction is (4aS,6R)-4a-hydroxy-L-erythro-5,6,7,8-tetrahydrobiopterin = (6R)-L-erythro-6,7-dihydrobiopterin + H2O. In Burkholderia cenocepacia (strain ATCC BAA-245 / DSM 16553 / LMG 16656 / NCTC 13227 / J2315 / CF5610) (Burkholderia cepacia (strain J2315)), this protein is Putative pterin-4-alpha-carbinolamine dehydratase.